The chain runs to 146 residues: Monothiol glutaredoxin-5, mitochondrial (146 aa).

In terms of domain architecture, Glutaredoxin spans arginine 26–alanine 131. Position 43 (lysine 43) interacts with glutathione. Residue cysteine 51 participates in [2Fe-2S] cluster binding. Residues arginine 83–lysine 87, isoleucine 95, and serine 108–aspartate 109 each bind glutathione.

The protein belongs to the glutaredoxin family. Monothiol subfamily. Homodimer. Interacts with ISA1 and ISA2.

It localises to the mitochondrion. Its function is as follows. Monothiol glutaredoxin involved in mitochondrial iron-sulfur (Fe/S) cluster transfer. Receives 2Fe/2S clusters from scaffold protein isu1 and mediates their transfer to apoproteins, to the 4Fe/FS cluster biosynthesis machinery, or export from mitochondrion. In Schizosaccharomyces pombe (strain 972 / ATCC 24843) (Fission yeast), this protein is Monothiol glutaredoxin-5, mitochondrial.